The primary structure comprises 141 residues: Inclusion membrane protein D (141 aa).

Transmembrane regions (helical) follow at residues Val38–Phe58 and Val68–Gly88.

Its subcellular location is the secreted. The protein localises to the host vacuole. The protein resides in the host pathogen-containing vacuole. It is found in the host pathogen-containing vacuole membrane. Inclusion membrane protein probably involved in early modification events of the chlamydial inclusion. The chain is Inclusion membrane protein D (incD) from Chlamydia trachomatis serovar D (strain ATCC VR-885 / DSM 19411 / UW-3/Cx).